We begin with the raw amino-acid sequence, 505 residues long: Probable ribonuclease FAU-1 (505 aa).

A disordered region spans residues 389–408 (ISGHGSGTYDELGTPRESGD).

The protein belongs to the FAU-1 family.

Functionally, probable RNase involved in rRNA stability through maturation and/or degradation of precursor rRNAs. Binds to RNA in loop regions with AU-rich sequences. This Haloquadratum walsbyi (strain DSM 16790 / HBSQ001) protein is Probable ribonuclease FAU-1.